A 30-amino-acid chain; its full sequence is L-amino-acid oxidase (30 aa).

It belongs to the flavin monoamine oxidase family. FIG1 subfamily. As to quaternary structure, monomer. This is in contrast with most of its orthologs, that are non-covalently linked homodimers. FAD serves as cofactor. Post-translationally, N-glycosylated. Expressed by the venom gland.

It localises to the secreted. The catalysed reaction is an L-alpha-amino acid + O2 + H2O = a 2-oxocarboxylate + H2O2 + NH4(+). It catalyses the reaction L-leucine + O2 + H2O = 4-methyl-2-oxopentanoate + H2O2 + NH4(+). The enzyme catalyses L-phenylalanine + O2 + H2O = 3-phenylpyruvate + H2O2 + NH4(+). It carries out the reaction L-tryptophan + O2 + H2O = indole-3-pyruvate + H2O2 + NH4(+). The catalysed reaction is L-methionine + O2 + H2O = 4-methylsulfanyl-2-oxobutanoate + H2O2 + NH4(+). It catalyses the reaction L-2-aminohexanoate + O2 + H2O = 2-oxohexanoate + H2O2 + NH4(+). The enzyme catalyses L-tyrosine + O2 + H2O = 3-(4-hydroxyphenyl)pyruvate + H2O2 + NH4(+). Its function is as follows. Catalyzes an oxidative deamination of predominantly hydrophobic and aromatic L-amino acids, thus producing hydrogen peroxide that may contribute to the diverse toxic effects of this enzyme. Is highly active against L-Met, L-Leu, L-norleucine (L-2-aminohexanoate), L-Trp, L-Phe, moderately active against L-Tyr, and no active on L-Gly, L-Ala, L-Val, L-Pro, L-His, L-Lys, L-Arg, L-Asp, L-Asn, L-Gln, L-Glu, L-Ser, and L-Thr. Exhibits diverse biological activities, such as hemorrhage, hemolysis, edema, antibacterial and antiparasitic activities. In addition, this protein induces apoptosis. It also interacts with endothelial cells, and inhibits collagen- and ADP-induced platelet aggregation. L-LAAO family effects on platelets are controversial, since it either induces aggregation or inhibits agonist-induced aggregation. These different effects are probably due to different experimental conditions. The protein is L-amino-acid oxidase of Bothrops leucurus (Whitetail lancehead).